Here is a 311-residue protein sequence, read N- to C-terminus: tRNA-cytidine(32) 2-sulfurtransferase (311 aa).

The PP-loop motif motif lies at 47–52; that stretch reads SGGKDS. [4Fe-4S] cluster-binding residues include Cys-122, Cys-125, and Cys-213.

It belongs to the TtcA family. Homodimer. Requires Mg(2+) as cofactor. The cofactor is [4Fe-4S] cluster.

It localises to the cytoplasm. It carries out the reaction cytidine(32) in tRNA + S-sulfanyl-L-cysteinyl-[cysteine desulfurase] + AH2 + ATP = 2-thiocytidine(32) in tRNA + L-cysteinyl-[cysteine desulfurase] + A + AMP + diphosphate + H(+). It functions in the pathway tRNA modification. Catalyzes the ATP-dependent 2-thiolation of cytidine in position 32 of tRNA, to form 2-thiocytidine (s(2)C32). The sulfur atoms are provided by the cysteine/cysteine desulfurase (IscS) system. In Enterobacter sp. (strain 638), this protein is tRNA-cytidine(32) 2-sulfurtransferase.